A 450-amino-acid polypeptide reads, in one-letter code: Phosphoglucosamine mutase (450 aa).

Ser-101 (phosphoserine intermediate) is an active-site residue. Mg(2+) contacts are provided by Ser-101, Asp-240, Asp-242, and Asp-244. Ser-101 carries the phosphoserine modification.

Belongs to the phosphohexose mutase family. Mg(2+) is required as a cofactor. In terms of processing, activated by phosphorylation.

The catalysed reaction is alpha-D-glucosamine 1-phosphate = D-glucosamine 6-phosphate. Catalyzes the conversion of glucosamine-6-phosphate to glucosamine-1-phosphate. This chain is Phosphoglucosamine mutase, found in Streptococcus equi subsp. equi (strain 4047).